Here is a 338-residue protein sequence, read N- to C-terminus: Tryptophan--tRNA ligase (338 aa).

Residues 11 to 13 (QPS) and 19 to 20 (GN) contribute to the ATP site. A 'HIGH' region motif is present at residues 12–20 (PSGELSIGN). Residue aspartate 135 participates in L-tryptophan binding. Residues 147–149 (GSD), valine 189, and 198–202 (KMSKS) each bind ATP. Positions 198–202 (KMSKS) match the 'KMSKS' region motif.

It belongs to the class-I aminoacyl-tRNA synthetase family. In terms of assembly, homodimer.

Its subcellular location is the cytoplasm. The catalysed reaction is tRNA(Trp) + L-tryptophan + ATP = L-tryptophyl-tRNA(Trp) + AMP + diphosphate + H(+). Functionally, catalyzes the attachment of tryptophan to tRNA(Trp). The chain is Tryptophan--tRNA ligase from Aliivibrio fischeri (strain ATCC 700601 / ES114) (Vibrio fischeri).